The following is a 521-amino-acid chain: Biotinidase (521 aa).

An N-terminal signal peptide occupies residues 1 to 25 (MSGARTAHALVFLLGCSALALGVCS). One can recognise a CN hydrolase domain in the interval 50 to 329 (NPLELSSRQQ…QGLVGTENTT (280 aa)). Residue Glu90 is the Proton acceptor of the active site. 2 N-linked (GlcNAc...) asparagine glycosylation sites follow: Asn128 and Asn181. Catalysis depends on Lys190, which acts as the Proton donor. Catalysis depends on Cys223, which acts as the Nucleophile. Asn380 carries an N-linked (GlcNAc...) asparagine glycan.

It belongs to the carbon-nitrogen hydrolase superfamily. BTD/VNN family.

Its subcellular location is the secreted. It is found in the extracellular space. It carries out the reaction biocytin + H2O = biotin + L-lysine. The enzyme catalyses biotin amide + H2O = biotin + NH4(+). Functionally, catalytic release of biotin from biocytin, the product of biotin-dependent carboxylases degradation. In Rattus norvegicus (Rat), this protein is Biotinidase.